Here is a 200-residue protein sequence, read N- to C-terminus: MSKFLQQKPIILASSSTIRHKLMKSLGLDFLVVPSNCNEEEIKTRHNSVELVELGITLAKIKALDVSQHYPEHYIIAADQLCVADKRVFNKPLNHQTAVSHLRELSGKQHQQIACLCIVKESKILWQYHETATLTLHHLSEKTIEAYLQAEKPYQSCGAYQYEGLGKWLFKEVQGSEDTILGLPLMPLVNALVNLKVVGI.

The Proton acceptor role is filled by Asp79.

The protein belongs to the Maf family. Requires a divalent metal cation as cofactor.

Its subcellular location is the cytoplasm. It carries out the reaction a ribonucleoside 5'-triphosphate + H2O = a ribonucleoside 5'-phosphate + diphosphate + H(+). The enzyme catalyses a 2'-deoxyribonucleoside 5'-triphosphate + H2O = a 2'-deoxyribonucleoside 5'-phosphate + diphosphate + H(+). Functionally, nucleoside triphosphate pyrophosphatase. May have a dual role in cell division arrest and in preventing the incorporation of modified nucleotides into cellular nucleic acids. The sequence is that of Nucleoside triphosphate pyrophosphatase from Legionella pneumophila subsp. pneumophila (strain Philadelphia 1 / ATCC 33152 / DSM 7513).